Reading from the N-terminus, the 215-residue chain is High mobility group protein B1 (215 aa).

Residues 9–79 (PRGKMSSYAF…RYEKEMKNYV (71 aa)) constitute a DNA-binding region (HMG box 1). Cysteine sulfonic acid (-SO3H); alternate is present on Cys23. Cys23 and Cys45 are joined by a disulfide. The interval 27 to 43 (HKKKHPDASVNFSEFSK) is NLS 1. The short motif at 27-43 (HKKKHPDASVNFSEFSK) is the Nuclear localization signal (NLS) 1 element. Cys45 bears the Cysteine sulfonic acid (-SO3H); alternate mark. The segment at 75 to 95 (MKNYVPPKGETKKKFKDPNAP) is disordered. A compositionally biased stretch (basic and acidic residues) spans 83 to 94 (GETKKKFKDPNA). Residues 95 to 163 (PKRPPSAFFL…KYEKDIAAYR (69 aa)) constitute a DNA-binding region (HMG box 2). Residue Cys106 is modified to Cysteine sulfonic acid (-SO3H). Residues 166–179 (GKVDAGKKVVAKAE) show a composition bias toward basic and acidic residues. The tract at residues 166-215 (GKVDAGKKVVAKAEKSKKKKEEEEDEDEDEEDEEDEEEEEEEEEDDDDDE) is disordered. The NLS 2 stretch occupies residues 178 to 184 (AEKSKKK). The Nuclear localization signal (NLS) 2 motif lies at 178–184 (AEKSKKK). Residues 187–215 (EEEDEDEDEEDEEDEEEEEEEEEDDDDDE) are compositionally biased toward acidic residues. The involved in intramolecular interaction with K-3 stretch occupies residues 196 to 210 (EDEEDEEEEEEEEED). The segment at 211–215 (DDDDE) is involved in interaction with histone H3.

This sequence belongs to the HMGB family. In terms of processing, reduction/oxidation of cysteine residues Cys-23, Cys-45 and Cys-106 and a possible intramolecular disulfide bond involving Cys-23 and Cys-45 give rise to different redox forms with specific functional activities: 1- fully reduced HMGB1 (HMGB1C23hC45hC106h), 2- disulfide HMGB1 (HMGB1C23-C45C106h) and 3- sulfonyl HMGB1 (HMGB1C23soC45soC106so).

It localises to the nucleus. The protein resides in the chromosome. Its subcellular location is the cytoplasm. It is found in the secreted. In terms of biological role, multifunctional redox sensitive protein with various roles in different cellular compartments. Nuclear functions are attributed to fully reduced HGMB1. Associates with chromatin and binds DNA with a preference to non-canonical DNA structures such as single-stranded DNA, DNA-containing cruciforms or bent structures, supercoiled DNA and ZDNA. Can bent DNA and enhance DNA flexibility by looping thus providing a mechanism to promote activities on various gene promoters. Can restructure the canonical nucleosome. Proposed to be an universal biosensor for nucleic acids. May promote inflammatory response to sterile and infectious signals and may be involved in the coordination and integration of innate and adaptive immune responses. In the cytoplasm may function as sensor and/or chaperone for immunogenic nucleic acids, and mediate autophagy. May act as danger associated molecular pattern (DAMP) molecule that amplifies immune responses during tissue injury. The polypeptide is High mobility group protein B1 (HMGB1) (Gallus gallus (Chicken)).